Here is a 160-residue protein sequence, read N- to C-terminus: Probable chemoreceptor glutamine deamidase CheD 1 (160 aa).

It belongs to the CheD family.

It carries out the reaction L-glutaminyl-[protein] + H2O = L-glutamyl-[protein] + NH4(+). Its function is as follows. Probably deamidates glutamine residues to glutamate on methyl-accepting chemotaxis receptors (MCPs), playing an important role in chemotaxis. The protein is Probable chemoreceptor glutamine deamidase CheD 1 of Syntrophus aciditrophicus (strain SB).